We begin with the raw amino-acid sequence, 310 residues long: Glutaminase (310 aa).

7 residues coordinate substrate: Ser67, Asn118, Glu161, Asn168, Tyr192, Tyr244, and Val262.

It belongs to the glutaminase family. In terms of assembly, homotetramer.

The enzyme catalyses L-glutamine + H2O = L-glutamate + NH4(+). This chain is Glutaminase, found in Legionella pneumophila (strain Paris).